Consider the following 66-residue polypeptide: UPF0337 protein SAG0606 (66 aa).

Residues 1–10 (MSQEKLKSKV) show a composition bias toward basic and acidic residues. Residues 1 to 23 (MSQEKLKSKVEQASGSLKEGAGK) are disordered.

It belongs to the UPF0337 (CsbD) family.

The polypeptide is UPF0337 protein SAG0606 (Streptococcus agalactiae serotype V (strain ATCC BAA-611 / 2603 V/R)).